A 70-amino-acid chain; its full sequence is Cold shock-like protein CspJ (70 aa).

Residues 7–67 (GLVKWFNPEK…GPKGPSAVNV (61 aa)) form the CSD domain.

Its subcellular location is the cytoplasm. The chain is Cold shock-like protein CspJ (cspJ) from Salmonella typhimurium (strain SL1344).